The primary structure comprises 540 residues: CTP synthase (540 aa).

An amidoligase domain region spans residues 1-270 (MNNLTSTKFI…DTQILKHFNI (270 aa)). Ser-18 contributes to the CTP binding site. A UTP-binding site is contributed by Ser-18. Residues 19–24 (SLGKGL) and Asp-76 each bind ATP. Asp-76 and Glu-144 together coordinate Mg(2+). Residues 151–153 (DIE), 191–196 (KTKPTQ), and Lys-227 contribute to the CTP site. UTP contacts are provided by residues 191–196 (KTKPTQ) and Lys-227. The Glutamine amidotransferase type-1 domain maps to 295 to 537 (TIAIIGKYIK…VQASLNYQET (243 aa)). Gly-356 contributes to the L-glutamine binding site. Cys-383 (nucleophile; for glutamine hydrolysis) is an active-site residue. L-glutamine contacts are provided by residues 384–387 (MGMQ), Glu-407, and Arg-462. Residues His-510 and Glu-512 contribute to the active site.

It belongs to the CTP synthase family. Homotetramer.

It carries out the reaction UTP + L-glutamine + ATP + H2O = CTP + L-glutamate + ADP + phosphate + 2 H(+). The catalysed reaction is L-glutamine + H2O = L-glutamate + NH4(+). The enzyme catalyses UTP + NH4(+) + ATP = CTP + ADP + phosphate + 2 H(+). It participates in pyrimidine metabolism; CTP biosynthesis via de novo pathway; CTP from UDP: step 2/2. Its activity is regulated as follows. Allosterically activated by GTP, when glutamine is the substrate; GTP has no effect on the reaction when ammonia is the substrate. The allosteric effector GTP functions by stabilizing the protein conformation that binds the tetrahedral intermediate(s) formed during glutamine hydrolysis. Inhibited by the product CTP, via allosteric rather than competitive inhibition. In terms of biological role, catalyzes the ATP-dependent amination of UTP to CTP with either L-glutamine or ammonia as the source of nitrogen. Regulates intracellular CTP levels through interactions with the four ribonucleotide triphosphates. The polypeptide is CTP synthase (Ehrlichia ruminantium (strain Welgevonden)).